The sequence spans 288 residues: Glycine--tRNA ligase alpha subunit (288 aa).

Belongs to the class-II aminoacyl-tRNA synthetase family. In terms of assembly, tetramer of two alpha and two beta subunits.

The protein localises to the cytoplasm. It catalyses the reaction tRNA(Gly) + glycine + ATP = glycyl-tRNA(Gly) + AMP + diphosphate. The polypeptide is Glycine--tRNA ligase alpha subunit (Rickettsia africae (strain ESF-5)).